The chain runs to 290 residues: Nucleotide-binding protein XF_1405 (290 aa).

13–20 (GLSGSGKS) provides a ligand contact to ATP. 65–68 (DIRS) contacts GTP.

The protein belongs to the RapZ-like family.

Displays ATPase and GTPase activities. In Xylella fastidiosa (strain 9a5c), this protein is Nucleotide-binding protein XF_1405.